Consider the following 229-residue polypeptide: Putative N-acetylmannosamine-6-phosphate 2-epimerase (229 aa).

This sequence belongs to the NanE family.

It catalyses the reaction an N-acyl-D-glucosamine 6-phosphate = an N-acyl-D-mannosamine 6-phosphate. Its pathway is amino-sugar metabolism; N-acetylneuraminate degradation; D-fructose 6-phosphate from N-acetylneuraminate: step 3/5. Converts N-acetylmannosamine-6-phosphate (ManNAc-6-P) to N-acetylglucosamine-6-phosphate (GlcNAc-6-P). This is Putative N-acetylmannosamine-6-phosphate 2-epimerase from Actinobacillus pleuropneumoniae serotype 5b (strain L20).